Here is an 823-residue protein sequence, read N- to C-terminus: Tax1-binding protein 1 homolog B (823 aa).

A coiled-coil region spans residues 149–487; the sequence is VTTKASYLEQ…QKQVVKFNEQ (339 aa). Disordered stretches follow at residues 342–377 and 486–519; these read HRQL…QQAN and EQQG…STSD. The span at 356–368 shows a compositional bias: basic and acidic residues; sequence KALREQLRQKEEQ. The span at 498–518 shows a compositional bias: low complexity; the sequence is AAAGPLSASPEASAPGSPSTS. A coiled-coil region spans residues 548 to 638; sequence QMLNEERERC…NREEEQKDSN (91 aa). A disordered region spans residues 650 to 746; it reads MPYAQDDPSP…EPAAPEPAEF (97 aa). Over residues 723–739 the composition is skewed to acidic residues; that stretch reads LEEPEEPQSTQNDDEPA. 2 UBZ1-type zinc fingers span residues 762-788 and 789-815; these read QKRC…VESH and WKIC…VLTH. Zn(2+) contacts are provided by Cys765, Cys768, His784, His788, Cys792, Cys795, His811, and His815.

As to expression, expressed at relatively high levels in both proximal and distal regions of the fin bud during pectoral fin development.

Functionally, may have anti-apoptotic activity. The protein is Tax1-binding protein 1 homolog B (tax1bp1b) of Danio rerio (Zebrafish).